A 648-amino-acid polypeptide reads, in one-letter code: 1-deoxy-D-xylulose-5-phosphate synthase (648 aa).

Thiamine diphosphate is bound by residues H72 and 113–115; that span reads GHA. D144 contributes to the Mg(2+) binding site. Thiamine diphosphate-binding positions include 145–146, N173, and E363; that span reads GA. Mg(2+) is bound at residue N173.

This sequence belongs to the transketolase family. DXPS subfamily. Homodimer. The cofactor is Mg(2+). Thiamine diphosphate is required as a cofactor.

The catalysed reaction is D-glyceraldehyde 3-phosphate + pyruvate + H(+) = 1-deoxy-D-xylulose 5-phosphate + CO2. It participates in metabolic intermediate biosynthesis; 1-deoxy-D-xylulose 5-phosphate biosynthesis; 1-deoxy-D-xylulose 5-phosphate from D-glyceraldehyde 3-phosphate and pyruvate: step 1/1. Its function is as follows. Catalyzes the acyloin condensation reaction between C atoms 2 and 3 of pyruvate and glyceraldehyde 3-phosphate to yield 1-deoxy-D-xylulose-5-phosphate (DXP). The polypeptide is 1-deoxy-D-xylulose-5-phosphate synthase (Symbiobacterium thermophilum (strain DSM 24528 / JCM 14929 / IAM 14863 / T)).